We begin with the raw amino-acid sequence, 70 residues long: Large ribosomal subunit protein bL31c (70 aa).

It belongs to the bacterial ribosomal protein bL31 family. Type A subfamily. In terms of assembly, part of the 50S ribosomal subunit.

It localises to the plastid. It is found in the chloroplast. In terms of biological role, binds the 23S rRNA. The protein is Large ribosomal subunit protein bL31c of Porphyra purpurea (Red seaweed).